Reading from the N-terminus, the 568-residue chain is MLAASVLRLTLPLCWLVAPQPTQPERLFHSRDRSDLEPSPLSQAKPIADLHDAQSFLLKYGWSEIPSPKESAGVPVGFTLAQAVRRFQKANRLPASGELDSPTLAAMNKPRCGVPDTRLPPRAALPTPPALLTSLGLRPRARQKRFLQMLFPKPDGQQEDASDTGASRAFSKKTLTWRLVGDAYSSQLSGDEQRYIFRLAFRMWSEVTPLDFREDRTAPGTMVDIKLGFGRGRHLGCPRVFDGSGQEFAHAWRLGEIHFDDDEHFTPLSSDTGISLLKVAVHEIGHVLGLPHTYRVGSIMQPNYIPQEPAFELDWADRKAIQRLYGSCKGSFDTVFDWIRKERNQYGEVRVRFNTYFFRNSWYWLYENRNNRTRYGDPLQILTGWRGIPTQSIDAYVHVWSWGKDERYFFKGSQYWRYDSENDQAHTEDEQGRSYPKLISEGFPGIPSPLDTAFYDRRQQLIYFFKESLVFAFDVNRNQVLNSYPKKMSQVFPAIMPQNHPFRNLDSAYYSYAHNSIFFFKGNSYWKVVSDKDKQQNTRLPLNGLFPKKPVSEKWFDVCDVHTSTLNM.

The N-terminal stretch at 1-24 is a signal peptide; sequence MLAASVLRLTLPLCWLVAPQPTQP. A propeptide spanning residues 25–143 is cleaved from the precursor; that stretch reads ERLFHSRDRS…SLGLRPRARQ (119 aa). The Cysteine switch signature appears at 110–117; it reads PRCGVPDT. Zn(2+) is bound by residues Cys112 and His282. Glu283 is a catalytic residue. Residues His286 and His292 each coordinate Zn(2+). Residues Cys328 and Cys559 are joined by a disulfide bond. 4 Hemopexin repeats span residues 329 to 388, 390 to 446, 447 to 495, and 502 to 558; these read KGSF…WRGI, TQSI…FPGI, PSPL…FPAI, and FRNL…WFDV. Asn371 carries N-linked (GlcNAc...) asparagine glycosylation.

It belongs to the peptidase M10A family. The cofactor is Zn(2+). It depends on Ca(2+) as a cofactor. In terms of processing, the precursor is cleaved by a furin endopeptidase.

It is found in the secreted. In terms of biological role, plays a specialized role in the generation of left-right asymmetry during embryogenesis. May act as a negative regulator of the NOTCH-signaling pathway. Cleaves alpha-1-antitrypsin. In Mus musculus (Mouse), this protein is Matrix metalloproteinase-21 (Mmp21).